Here is a 170-residue protein sequence, read N- to C-terminus: Cathelicidin antimicrobial peptide (170 aa).

The signal sequence occupies residues 1-30; that stretch reads MKTQRDGHSLGGWSLMLLLLGLLMPLAIVA. Positions 31 to 131 are cleaved as a propeptide — cathelin-like domain (CLD); the sequence is QVLSYKEAVL…DISCDKDNRR (101 aa). Intrachain disulfides connect C86–C97 and C108–C125. The active core stretch occupies residues 150-162; sequence FKRIVQRIKDFLQ.

Belongs to the cathelicidin family. In terms of assembly, monomer, homodimer or homotrimer (in vitro). Oligomerizes as tetra- or hexamer in solution (in vitro). Post-translationally, proteolytically cleaved by proteinase PRTN3 into antibacterial peptide LL-37. Proteolytically cleaved by cathepsin CTSG and neutrophil elastase ELANE. In terms of processing, resistant to proteolytic degradation in solution, and when bound to both zwitterionic (mimicking mammalian membranes) and negatively charged membranes (mimicking bacterial membranes). After secretion onto the skin surface, the CAMP gene product is processed by a serine protease-dependent mechanism into multiple novel antimicrobial peptides distinct from and shorter than cathelicidin LL-37. These peptides show enhanced antimicrobial action, acquiring the ability to kill skin pathogens such as S.aureus, E.coli and C.albicans. These peptides have lost the ability to stimulate CXCL8/IL8 release from keratinocytes. The peptides act synergistically, killing bacteria at lower concentrations when present together, and maintain activity at increased salt condition.

The protein resides in the secreted. It localises to the vesicle. In terms of biological role, antimicrobial protein that is an integral component of the innate immune system. Binds to bacterial lipopolysaccharides (LPS). Acts via neutrophil N-formyl peptide receptors to enhance the release of CXCL2. Postsecretory processing generates multiple cathelicidin antimicrobial peptides with various lengths which act as a topical antimicrobial defense in sweat on skin. The unprocessed precursor form, cathelicidin antimicrobial peptide, inhibits the growth of Gram-negative E.coli and E.aerogenes with efficiencies comparable to that of the mature peptide LL-37 (in vitro). Functionally, antimicrobial peptide that is an integral component of the innate immune system. Binds to bacterial lipopolysaccharides (LPS). Causes membrane permeabilization by forming transmembrane pores (in vitro). Causes lysis of E.coli. Exhibits antimicrobial activity against Gram-negative bacteria such as P.aeruginosa, S.typhimurium, E.aerogenes, E.coli and P.syringae, Gram-positive bacteria such as L.monocytogenes, S.epidermidis, S.pyogenes and S.aureus, as well as vancomycin-resistant enterococci (in vitro). Exhibits antimicrobial activity against methicillin-resistant S.aureus, P.mirabilis, and C.albicans in low-salt media, but not in media containing 100 mM NaCl (in vitro). Forms chiral supramolecular assemblies with quinolone signal (PQS) molecules of P.aeruginosa, which may lead to interference of bacterial quorum signaling and perturbance of bacterial biofilm formation. May form supramolecular fiber-like assemblies on bacterial membranes. Induces cytokine and chemokine producation as well as TNF/TNFA and CSF2/GMCSF production in normal human keratinocytes. Exhibits hemolytic activity against red blood cells. Its function is as follows. Exhibits antimicrobial activity against E.coli and B.megaterium (in vitro). In Hylobates moloch (Silvery gibbon), this protein is Cathelicidin antimicrobial peptide.